A 553-amino-acid polypeptide reads, in one-letter code: Ubiquitin carboxyl-terminal hydrolase 17-like protein 15 (553 aa).

One can recognise a USP domain in the interval 80–375 (AGLQNMGNTC…QAYVLFYIQK (296 aa)). C89 acts as the Nucleophile in catalysis. H334 (proton acceptor) is an active-site residue. Basic and acidic residues-rich tracts occupy residues 382–392 (SESVSRGREPR) and 398–413 (DTDR…RDHP). 2 disordered regions span residues 382–413 (SESV…RDHP) and 491–524 (STTP…HSKR). Residues 496 to 505 (HQESMNTGTL) show a composition bias toward polar residues. Basic residues predominate over residues 510–524 (GRARRSKGKNKHSKR).

It belongs to the peptidase C19 family. USP17 subfamily.

The protein resides in the nucleus. It is found in the endoplasmic reticulum. It catalyses the reaction Thiol-dependent hydrolysis of ester, thioester, amide, peptide and isopeptide bonds formed by the C-terminal Gly of ubiquitin (a 76-residue protein attached to proteins as an intracellular targeting signal).. In terms of biological role, deubiquitinating enzyme that removes conjugated ubiquitin from specific proteins to regulate different cellular processes that may include cell proliferation, progression through the cell cycle, apoptosis, cell migration, and the cellular response to viral infection. In Homo sapiens (Human), this protein is Ubiquitin carboxyl-terminal hydrolase 17-like protein 15 (USP17L15).